Reading from the N-terminus, the 87-residue chain is Small ribosomal subunit protein uS15 (87 aa).

Belongs to the universal ribosomal protein uS15 family. As to quaternary structure, part of the 30S ribosomal subunit. Forms a bridge to the 50S subunit in the 70S ribosome, contacting the 23S rRNA.

One of the primary rRNA binding proteins, it binds directly to 16S rRNA where it helps nucleate assembly of the platform of the 30S subunit by binding and bridging several RNA helices of the 16S rRNA. Its function is as follows. Forms an intersubunit bridge (bridge B4) with the 23S rRNA of the 50S subunit in the ribosome. The sequence is that of Small ribosomal subunit protein uS15 from Dehalococcoides mccartyi (strain ATCC BAA-2100 / JCM 16839 / KCTC 5957 / BAV1).